The primary structure comprises 328 residues: Homoarginine-6-hydroxylase 2-ODD-233 (328 aa).

The 106-residue stretch at 183-288 folds into the Fe2OG dioxygenase domain; the sequence is FWVCRLIGYP…VSVAFFYESN (106 aa). 3 residues coordinate Fe cation: H210, D212, and H268. Residue R278 coordinates 2-oxoglutarate.

The protein belongs to the iron/ascorbate-dependent oxidoreductase family. The cofactor is Fe(2+). L-ascorbate serves as cofactor. In terms of tissue distribution, expressed in roots and shoots.

Its subcellular location is the cytoplasm. It catalyses the reaction L-homoarginine + 2-oxoglutarate + O2 = 6-hydroxy-L-homoarginine + succinate + CO2. The catalysed reaction is melatonin + 2-oxoglutarate + O2 = 2-hydroxymelatonin + succinate + CO2. Functionally, 2-oxoglutarate-dependent dioxygenase catalyzing homoarginine 6-hydroxylation thus producing 6-hydroxy-L-homoarginine. Guanidine (Gd) is in turn synthesized by the spontaneous conversion of 6-hydroxy-L-homoarginine to (S)-2-amino-6-oxohexanoate (RHEA:79843); guanidine is a nitrogen-rich compound that can serve as a defense or signaling substance. Involved in melatonin degradation. Catalyzes the hydroxylation of melatonin to produce 2-hydroxymelatonin. This chain is Homoarginine-6-hydroxylase 2-ODD-233, found in Oryza sativa subsp. japonica (Rice).